A 204-amino-acid polypeptide reads, in one-letter code: MFMDSRETLCENPVIITDRDAWKEINLKDAGTIEVEIGFGSGEYLLRRASEYPERLFIGIEKKPGMITEVSKRVASHNLNNIRLLESCAKDAFADLFPANSISRVYSLFPDPWPKRKHLHYRLFSSEYLRLLNNRLIFGSEALIVTDSEDYCNWMLKQLPDTGFEVENSIIPPQFDTRFERKWLEQNFNTFFRILLKKARHIET.

Positions 36, 61, and 111 each coordinate S-adenosyl-L-methionine. The active site involves Asp-111. Substrate-binding positions include Lys-115, Asp-147, and 177-180 (TRFE).

This sequence belongs to the class I-like SAM-binding methyltransferase superfamily. TrmB family.

The catalysed reaction is guanosine(46) in tRNA + S-adenosyl-L-methionine = N(7)-methylguanosine(46) in tRNA + S-adenosyl-L-homocysteine. It participates in tRNA modification; N(7)-methylguanine-tRNA biosynthesis. In terms of biological role, catalyzes the formation of N(7)-methylguanine at position 46 (m7G46) in tRNA. The sequence is that of tRNA (guanine-N(7)-)-methyltransferase from Chlorobium phaeobacteroides (strain DSM 266 / SMG 266 / 2430).